Here is a 508-residue protein sequence, read N- to C-terminus: Steroid 17-alpha-hydroxylase/17,20 lyase (508 aa).

A heme-binding site is contributed by Cys442.

Belongs to the cytochrome P450 family. Requires heme as cofactor.

It localises to the endoplasmic reticulum membrane. The protein resides in the microsome membrane. The catalysed reaction is a C21-steroid + reduced [NADPH--hemoprotein reductase] + O2 = a 17alpha-hydroxy-C21-steroid + oxidized [NADPH--hemoprotein reductase] + H2O + H(+). It carries out the reaction progesterone + reduced [NADPH--hemoprotein reductase] + O2 = 17alpha-hydroxyprogesterone + oxidized [NADPH--hemoprotein reductase] + H2O + H(+). It catalyses the reaction pregnenolone + reduced [NADPH--hemoprotein reductase] + O2 = 17alpha-hydroxypregnenolone + oxidized [NADPH--hemoprotein reductase] + H2O + H(+). The enzyme catalyses 17alpha-hydroxyprogesterone + reduced [NADPH--hemoprotein reductase] + O2 = androst-4-ene-3,17-dione + acetate + oxidized [NADPH--hemoprotein reductase] + H2O + 2 H(+). The catalysed reaction is 17alpha-hydroxyprogesterone + reduced [NADPH--hemoprotein reductase] + O2 = 16alpha,17alpha-dihydroxyprogesterone + oxidized [NADPH--hemoprotein reductase] + H2O + H(+). It carries out the reaction 16alpha,17alpha-dihydroxyprogesterone + reduced [NADPH--hemoprotein reductase] + O2 = 6beta,16alpha,17alpha-trihydroxyprogesterone + oxidized [NADPH--hemoprotein reductase] + H2O + H(+). It catalyses the reaction 17alpha-hydroxypregnenolone + reduced [NADPH--hemoprotein reductase] + O2 = 3beta-hydroxyandrost-5-en-17-one + acetate + oxidized [NADPH--hemoprotein reductase] + H2O + 2 H(+). The enzyme catalyses 16alpha,17alpha-dihydroxypregnenolone + reduced [NADPH--hemoprotein reductase] + O2 = 3beta,16alpha-dihydroxy-androst-5-en-17-one + acetate + oxidized [NADPH--hemoprotein reductase] + H2O + 2 H(+). The catalysed reaction is 3beta-hydroxyandrost-5-en-17-one + reduced [NADPH--hemoprotein reductase] + O2 = 3beta,16alpha-dihydroxy-androst-5-en-17-one + oxidized [NADPH--hemoprotein reductase] + H2O + H(+). It carries out the reaction androst-4-ene-3,17-dione + reduced [NADPH--hemoprotein reductase] + O2 = 16alpha-hydroxyandrost-4-ene-3,17-dione + oxidized [NADPH--hemoprotein reductase] + H2O + H(+). Its pathway is steroid hormone biosynthesis. It functions in the pathway steroid biosynthesis; glucocorticoid biosynthesis. Regulated predominantly by intracellular cAMP levels. The 17,20-lyase activity is stimulated by cytochrome b5, which acts as an allosteric effector increasing the Vmax of the lyase activity. Its function is as follows. A cytochrome P450 monooxygenase involved in corticoid and androgen biosynthesis. Catalyzes 17-alpha hydroxylation of C21 steroids, which is common for both pathways. A second oxidative step, required only for androgen synthesis, involves an acyl-carbon cleavage. The 17-alpha hydroxy intermediates, as part of adrenal glucocorticoids biosynthesis pathway, are precursors of cortisol. Hydroxylates steroid hormones, pregnenolone and progesterone to form 17-alpha hydroxy metabolites, followed by the cleavage of the C17-C20 bond to form C19 steroids, dehydroepiandrosterone (DHEA) and androstenedione. Has 16-alpha hydroxylase activity. Catalyzes 16-alpha hydroxylation of 17-alpha hydroxy pregnenolone, followed by the cleavage of the C17-C20 bond to form 16-alpha-hydroxy DHEA. Also 16-alpha hydroxylates androgens, relevant for estriol synthesis. Mechanistically, uses molecular oxygen inserting one oxygen atom into a substrate, and reducing the second into a water molecule, with two electrons provided by NADPH via cytochrome P450 reductase (CPR; NADPH-ferrihemoprotein reductase). The sequence is that of Steroid 17-alpha-hydroxylase/17,20 lyase (CYP17A1) from Equus caballus (Horse).